Reading from the N-terminus, the 156-residue chain is Small ribosomal subunit protein uS7c (156 aa).

It belongs to the universal ribosomal protein uS7 family. In terms of assembly, part of the 30S ribosomal subunit.

It localises to the plastid. Its subcellular location is the cyanelle. One of the primary rRNA binding proteins, it binds directly to 16S rRNA where it nucleates assembly of the head domain of the 30S subunit. The polypeptide is Small ribosomal subunit protein uS7c (rps7) (Cyanophora paradoxa).